The following is a 404-amino-acid chain: Riboflavin biosynthesis protein RibBA (404 aa).

A DHBP synthase region spans residues 1 to 204; that stretch reads MEELKLNTIE…IRDLIAYRLK (204 aa). D-ribulose 5-phosphate contacts are provided by residues 30–31, aspartate 35, 143–147, and glutamate 167; these read RE and RAGHT. Glutamate 31 is a Mg(2+) binding site. Histidine 146 is a binding site for Mg(2+). The segment at 205-404 is GTP cyclohydrolase II; sequence QESLVEKGVE…RMGHTLHFNK (200 aa). 255–259 serves as a coordination point for GTP; the sequence is RVHSS. Residues cysteine 260, cysteine 271, and cysteine 273 each coordinate Zn(2+). Residues glutamine 276, 298–300, and threonine 320 each bind GTP; that span reads EGR. Aspartate 332 acts as the Proton acceptor; for GTP cyclohydrolase activity in catalysis. The active-site Nucleophile; for GTP cyclohydrolase activity is the arginine 334. GTP-binding residues include threonine 355 and lysine 360.

The protein in the N-terminal section; belongs to the DHBP synthase family. In the C-terminal section; belongs to the GTP cyclohydrolase II family. Requires Mg(2+) as cofactor. Mn(2+) serves as cofactor. The cofactor is Zn(2+).

It catalyses the reaction D-ribulose 5-phosphate = (2S)-2-hydroxy-3-oxobutyl phosphate + formate + H(+). The enzyme catalyses GTP + 4 H2O = 2,5-diamino-6-hydroxy-4-(5-phosphoribosylamino)-pyrimidine + formate + 2 phosphate + 3 H(+). It participates in cofactor biosynthesis; riboflavin biosynthesis; 2-hydroxy-3-oxobutyl phosphate from D-ribulose 5-phosphate: step 1/1. It functions in the pathway cofactor biosynthesis; riboflavin biosynthesis; 5-amino-6-(D-ribitylamino)uracil from GTP: step 1/4. In terms of biological role, catalyzes the conversion of D-ribulose 5-phosphate to formate and 3,4-dihydroxy-2-butanone 4-phosphate. Catalyzes the conversion of GTP to 2,5-diamino-6-ribosylamino-4(3H)-pyrimidinone 5'-phosphate (DARP), formate and pyrophosphate. In Phocaeicola vulgatus (strain ATCC 8482 / DSM 1447 / JCM 5826 / CCUG 4940 / NBRC 14291 / NCTC 11154) (Bacteroides vulgatus), this protein is Riboflavin biosynthesis protein RibBA.